The chain runs to 284 residues: L-ribulose-5-phosphate 3-epimerase UlaE (284 aa).

This sequence belongs to the L-ribulose-5-phosphate 3-epimerase family.

The enzyme catalyses L-ribulose 5-phosphate = L-xylulose 5-phosphate. It functions in the pathway cofactor degradation; L-ascorbate degradation; D-xylulose 5-phosphate from L-ascorbate: step 3/4. Catalyzes the isomerization of L-xylulose-5-phosphate to L-ribulose-5-phosphate. Is involved in the anaerobic L-ascorbate utilization. In Escherichia coli (strain ATCC 8739 / DSM 1576 / NBRC 3972 / NCIMB 8545 / WDCM 00012 / Crooks), this protein is L-ribulose-5-phosphate 3-epimerase UlaE.